A 261-amino-acid polypeptide reads, in one-letter code: uncharacterized protein (261 aa).

3 helical membrane passes run 15 to 35, 87 to 107, and 131 to 151; these read WYSV…IIVC, VYLI…IRNA, and LLLY…YFLI. Over residues 234 to 246 the composition is skewed to basic and acidic residues; the sequence is LEEKKAKRRQNAE. The interval 234–261 is disordered; that stretch reads LEEKKAKRRQNAERRKKRREIAMEQREQ.

The protein resides in the membrane. This is an uncharacterized protein from Caenorhabditis elegans.